The primary structure comprises 564 residues: uncharacterized protein (564 aa).

Residues Met-1–Ser-17 show a composition bias toward polar residues. Residues Met-1–Ser-564 are disordered. 2 stretches are compositionally biased toward low complexity: residues Ser-79–Pro-97 and Ser-114–Thr-134. The span at Arg-153–Ser-168 shows a compositional bias: polar residues. Low complexity predominate over residues Thr-170–Thr-179. Residues Gly-250–Ala-271 show a composition bias toward pro residues. Residues Ser-272–Ser-299 are compositionally biased toward low complexity. Positions Pro-318 to Arg-351 are enriched in polar residues. The span at Arg-378–Ser-416 shows a compositional bias: low complexity. The segment covering Ser-467–Ser-564 has biased composition (polar residues).

This is an uncharacterized protein from Homo sapiens (Human).